The chain runs to 130 residues: Small ribosomal subunit protein uS9 (130 aa).

This sequence belongs to the universal ribosomal protein uS9 family.

This is Small ribosomal subunit protein uS9 from Pseudomonas syringae pv. tomato (strain ATCC BAA-871 / DC3000).